A 633-amino-acid chain; its full sequence is Extracellular metalloproteinase 5 (633 aa).

The N-terminal stretch at Met1–His21 is a signal peptide. The propeptide occupies Pro22–Ala245. Asn286 is a glycosylation site (N-linked (GlcNAc...) asparagine). His428 is a binding site for Zn(2+). The active site involves Glu429. Residue His432 coordinates Zn(2+). 2 N-linked (GlcNAc...) asparagine glycosylation sites follow: Asn592 and Asn621.

The protein belongs to the peptidase M36 family. Zn(2+) is required as a cofactor.

It is found in the secreted. In terms of biological role, secreted metalloproteinase probably acting as a virulence factor. The polypeptide is Extracellular metalloproteinase 5 (MEP5) (Arthroderma benhamiae (Trichophyton mentagrophytes)).